A 215-amino-acid polypeptide reads, in one-letter code: Protein C' (215 aa).

The segment at 12-34 (MPSFLKKILKLRGRRQEDESRSR) is disordered. Positions 15-22 (FLKKILKL) are involved in self-degradation and in host STAT1 degradation. Positions 25 to 35 (RRQEDESRSRM) are enriched in basic and acidic residues. Over residues 36-66 (LSDSSTQSYQVNQLTSEETEAGSTIPSTPSK) the composition is skewed to polar residues.

Belongs to the respirovirus protein C family. In terms of assembly, the different isoforms interact (via C-terminus) with unphosphorylated and phosphorylated human STAT1 (via N-terminus), favoring the formation of parallel STAT1 homodimers. The different isoforms do not interact with host STAT2. C protein interacts with L protein; this interaction has an inhibitory effect on viral transcription and replication. In terms of processing, protein Y1 is produced not only by alternative initiation, but also by proteolytic cleavage of C'. Only alternative initiation is detected in vitro, whereas in vivo cleavage seems to be predominant.

It is found in the host cytoplasm. In terms of biological role, the different products prevent the establishment of cellular antiviral state by blocking the interferon-alpha/beta (IFN-alpha/beta) and IFN-gamma signaling pathways. They inhibit IFN-alpha/beta induced tyrosine phosphorylation of STAT1 and STAT2. Blocking the IFN-alpha/beta pathway requires binding to STAT1 in the cytoplasm. They inhibit IFN-gamma induced serine phosphorylation of STAT1. Block the IFN-gamma pathway by binding to and stabilizing the parallel form of the STAT1 dimer, further inducing high-molecular-weight complex formation and inhibition of transcription by IFN-gamma. May also have a role in preventing the cell to enter apoptosis. Modulate regulation of viral transcription and replication. Overexpression inhibits the viral RNA polymerase. The absence of all C', C and Y1 proteins leads to viral delayed growth. Plays an important role in virion particles release. Modulates virion shape. The polypeptide is Protein C' (P/V/C) (Cavia cutleri (Guinea pig)).